Here is a 324-residue protein sequence, read N- to C-terminus: UDP-N-acetylenolpyruvoylglucosamine reductase (324 aa).

An FAD-binding PCMH-type domain is found at 38 to 217 (AGGLAELMFQ…IRAEMDAVRQ (180 aa)). Arg183 is a catalytic residue. The Proton donor role is filled by Ser232. Glu302 is a catalytic residue.

This sequence belongs to the MurB family. Requires FAD as cofactor.

It is found in the cytoplasm. The enzyme catalyses UDP-N-acetyl-alpha-D-muramate + NADP(+) = UDP-N-acetyl-3-O-(1-carboxyvinyl)-alpha-D-glucosamine + NADPH + H(+). Its pathway is cell wall biogenesis; peptidoglycan biosynthesis. In terms of biological role, cell wall formation. This is UDP-N-acetylenolpyruvoylglucosamine reductase from Allorhizobium ampelinum (strain ATCC BAA-846 / DSM 112012 / S4) (Agrobacterium vitis (strain S4)).